Here is a 227-residue protein sequence, read N- to C-terminus: uncharacterized protein (227 aa).

7 helical membrane passes run 25–45 (LLGF…NAGF), 49–69 (AAFG…YGMI), 80–100 (TGVT…GPVL), 111–131 (KIVG…SALA), 144–164 (FLTV…FLGI), 165–185 (PALA…MIMW), and 201–221 (AALT…NILL).

It is found in the cell membrane. This is an uncharacterized protein from Neisseria meningitidis serogroup B (strain ATCC BAA-335 / MC58).